A 180-amino-acid polypeptide reads, in one-letter code: Large ribosomal subunit protein uL6 (180 aa).

The protein belongs to the universal ribosomal protein uL6 family. Part of the 50S ribosomal subunit.

Its function is as follows. This protein binds to the 23S rRNA, and is important in its secondary structure. It is located near the subunit interface in the base of the L7/L12 stalk, and near the tRNA binding site of the peptidyltransferase center. The sequence is that of Large ribosomal subunit protein uL6 from Clostridium botulinum (strain ATCC 19397 / Type A).